We begin with the raw amino-acid sequence, 242 residues long: Large ribosomal subunit protein uL1 (242 aa).

Belongs to the universal ribosomal protein uL1 family. As to quaternary structure, part of the 50S ribosomal subunit.

In terms of biological role, binds directly to 23S rRNA. The L1 stalk is quite mobile in the ribosome, and is involved in E site tRNA release. Functionally, protein L1 is also a translational repressor protein, it controls the translation of the L11 operon by binding to its mRNA. This Wigglesworthia glossinidia brevipalpis protein is Large ribosomal subunit protein uL1.